Consider the following 172-residue polypeptide: uncharacterized protein (172 aa).

This is an uncharacterized protein from Haemophilus influenzae (strain ATCC 51907 / DSM 11121 / KW20 / Rd).